Consider the following 372-residue polypeptide: L-selectin (372 aa).

A signal peptide spans 1 to 28 (MIFPWKCQSTQRDLWNIFKLWGWTMLCC). A propeptide spanning residues 29–38 (DFLAHHGTDC) is cleaved from the precursor. The Extracellular portion of the chain corresponds to 39 to 332 (WTYHYSEKPM…FSMIKEGDYN (294 aa)). A C-type lectin domain is found at 55–155 (RFCRDNYTDL…ACHKLKAALC (101 aa)). Disulfide bonds link Cys57–Cys155, Cys128–Cys147, Cys128–Cys160, Cys160–Cys171, Cys165–Cys180, Cys182–Cys191, Cys197–Cys241, Cys227–Cys254, Cys259–Cys303, and Cys289–Cys316. N-linked (GlcNAc...) asparagine glycans are attached at residues Asn60 and Asn104. Ca(2+)-binding residues include Glu118, Asn120, Glu126, Asn143, and Asp144. Residues 156–192 (YTASCQPWSCSGHGECVEIINNYTCNCDVGYYGPQCQ) enclose the EGF-like domain. A glycan (N-linked (GlcNAc...) asparagine) is linked at Asn177. Sushi domains are found at residues 195 to 256 (IQCE…TCQV) and 257 to 318 (IQCE…ICQK). 4 N-linked (GlcNAc...) asparagine glycosylation sites follow: Asn216, Asn232, Asn246, and Asn271. The helical transmembrane segment at 333–355 (PLFIPVAVMVTAFSGLAFIIWLA) threads the bilayer. Over 356 to 372 (RRLKKGKKSKRSMDDPY) the chain is Cytoplasmic.

Belongs to the selectin/LECAM family. As to quaternary structure, interaction with SELPLG/PSGL1 and PODXL2 is required for promoting recruitment and rolling of leukocytes. This interaction is dependent on the sialyl Lewis X glycan modification of SELPLG and PODXL2, and tyrosine sulfation modifications of SELPLG. Sulfation on 'Tyr-51' of SELPLG is important for L-selectin binding. Post-translationally, N-glycosylated.

Its subcellular location is the cell membrane. Its function is as follows. Calcium-dependent lectin that mediates cell adhesion by binding to glycoproteins on neighboring cells. Mediates the adherence of lymphocytes to endothelial cells of high endothelial venules in peripheral lymph nodes. Promotes initial tethering and rolling of leukocytes in endothelia. The protein is L-selectin (SELL) of Pan troglodytes (Chimpanzee).